The primary structure comprises 822 residues: Ras GTPase-activating-like protein rgaA (822 aa).

The interval 1 to 36 (MNKEEYSDISDSESEEVHETNNHNEHEHEEEDDTPE) is disordered. A compositionally biased stretch (basic and acidic residues) spans 15 to 27 (EEVHETNNHNEHE). Residues 104–152 (EDKESDWIAEIQELKRNLVSEVRRNHTLERDLNRLDKRIALLIKNRGNI) adopt a coiled-coil conformation. Positions 161–822 (GLKAPKHKGD…IHLLNKLFLY (662 aa)) are required for interaction to rac1A. One can recognise a Ras-GAP domain in the interval 234–477 (FLLLSLYRLS…GDIKNYLQEI (244 aa)).

As to quaternary structure, heterotetramer. Quaternary complex with activated rac1A, ctxA and ctxB. Interacts directly with rac1A and ctxA. Preferentially interacts with activated forms of rac1A, rac1B and rac1C. Interacts with racE.

The protein localises to the cytoplasm. The protein resides in the cell cortex. It is found in the cleavage furrow. Part of signaling pathway that is required for completion of cytokinesis. gapA and rgaA control cortexillin localization to the cleavage furrow and hence may be involved in cleavage of the midbody in the final stage of cytokinesis by regulating the actin cytoskeleton. Forms a complex by linking activated rac1A to ctxA. Assembly of this complex is necessary for the recruitment of cortexillin to the midzone of a dividing cell. Overexpression leads to the suppression of the formation of cellular projections containing F-actin and to a defect in cytokinesis. The protein is Ras GTPase-activating-like protein rgaA (rgaA) of Dictyostelium discoideum (Social amoeba).